The chain runs to 341 residues: HTH-type transcriptional repressor PurR (341 aa).

An HTH lacI-type domain is found at 2–56 (ATIKDVAKRANVSTTTVSHVINKTRFVSEETRNAVWAAIKELHYSPSAVARSLKV). The segment at residues 4 to 23 (IKDVAKRANVSTTTVSHVIN) is a DNA-binding region (H-T-H motif). Residues 48 to 56 (SAVARSLKV) mediate DNA binding. Residues Tyr73, Arg190, Thr192, Phe221, and Asp275 each contribute to the hypoxanthine site.

As to quaternary structure, homodimer.

Its pathway is purine metabolism; purine nucleotide biosynthesis [regulation]. Is the main repressor of the genes involved in the de novo synthesis of purine nucleotides, regulating purB, purC, purEK, purF, purHD, purL, purMN and guaBA expression. PurR is allosterically activated to bind its cognate DNA by binding the purine corepressors, hypoxanthine or guanine, thereby effecting transcription repression. This Escherichia coli O139:H28 (strain E24377A / ETEC) protein is HTH-type transcriptional repressor PurR.